A 274-amino-acid polypeptide reads, in one-letter code: Thiazole synthase (274 aa).

The active-site Schiff-base intermediate with DXP is the lysine 115. Residues glycine 176, 202–203 (AG), and 224–225 (NS) contribute to the 1-deoxy-D-xylulose 5-phosphate site.

Belongs to the ThiG family. As to quaternary structure, homotetramer. Forms heterodimers with either ThiH or ThiS.

The protein resides in the cytoplasm. The catalysed reaction is [ThiS sulfur-carrier protein]-C-terminal-Gly-aminoethanethioate + 2-iminoacetate + 1-deoxy-D-xylulose 5-phosphate = [ThiS sulfur-carrier protein]-C-terminal Gly-Gly + 2-[(2R,5Z)-2-carboxy-4-methylthiazol-5(2H)-ylidene]ethyl phosphate + 2 H2O + H(+). Its pathway is cofactor biosynthesis; thiamine diphosphate biosynthesis. In terms of biological role, catalyzes the rearrangement of 1-deoxy-D-xylulose 5-phosphate (DXP) to produce the thiazole phosphate moiety of thiamine. Sulfur is provided by the thiocarboxylate moiety of the carrier protein ThiS. In vitro, sulfur can be provided by H(2)S. The protein is Thiazole synthase of Psychrobacter arcticus (strain DSM 17307 / VKM B-2377 / 273-4).